We begin with the raw amino-acid sequence, 145 residues long: MLLSRAISVVALLACICCGVHTQDSKADLGTLRTTDSAIITSQRRLRTSVDLVDNEERFRWPFQQFFKDRWHRKQIKTYFRDQKDNVSEGLVEQLIARHGLKNVEKVLSEVKFPLAVQISIRKILVNYKGKQAFTRPHLTPADTL.

The signal sequence occupies residues 1–22 (MLLSRAISVVALLACICCGVHT). A RxLR-dEER motif is present at residues 44-58 (RRLRTSVDLVDNEER).

It belongs to the RxLR effector family.

It localises to the secreted. The protein resides in the host cell membrane. Functionally, secreted effector that triggers a robust hypersensitive response (HR) in Lactuca sativa cv. Design that is resistant to multiple B.lactucae races, including Bl:24. In Bremia lactucae (Lettuce downy mildew), this protein is RxLR effector protein BLR40.